The primary structure comprises 226 residues: Glutathione S-transferase-like protein gedE (226 aa).

The GST N-terminal domain maps to 4–85; that stretch reads LLPIKVWGQG…YLVERYDTAH (82 aa). Residues 92 to 226 form the GST C-terminal domain; sequence DTNDAQHARQ…VLSAVMPPPS (135 aa).

Belongs to the GST superfamily.

It functions in the pathway secondary metabolite biosynthesis. Glutathione S-transferase-like protein; part of the gene cluster that mediates the biosynthesis of geodin, an intermediate in the biosynthesis of other natural products. The pathway begins with the synthesis of atrochrysone thioester by the polyketide synthase (PKS) gedC. The atrochrysone carboxyl ACP thioesterase gedB then breaks the thioester bond and releases the atrochrysone carboxylic acid from gedC. The atrochrysone carboxylic acid is then converted to atrochrysone which is further transformed into emodinanthrone. The next step is performed by the emodinanthrone oxygenase gedH that catalyzes the oxidation of emodinanthrone to emodin. Emodin O-methyltransferase encoded probably by gedA then catalyzes methylation of the 8-hydroxy group of emodin to form questin. Ring cleavage of questin by questin oxidase gedK leads to desmethylsulochrin via several intermediates including questin epoxide. Another methylation step probably catalyzed by methyltransferase gedG leads to the formation of sulochrin which is further converted to dihydrogeodin by the sulochrin halogenase gedL. Finally, the dihydrogeodin oxidase gedJ catalyzes the stereospecific phenol oxidative coupling reaction converting dihydrogeodin to geodin. The chain is Glutathione S-transferase-like protein gedE from Aspergillus terreus (strain NIH 2624 / FGSC A1156).